Reading from the N-terminus, the 300-residue chain is MNKIWKLKNVKVGVAPILWTNDDMPELGGDISFDRAISEMAQAGYQGTEIGNKFPKDAKILLRELKKYNLEIASAWFSGYIISDFEKNFQDFQKHCLFLKALGAKVVVFSEQTYSIQGQNKPLFKDKPYFTNQEFENLAQGLNKFGKWSKQHGIELVYHHHMGTGIQSLKETEKILELTDPEFVSLIFDTGHFAHAGEDIVFCLKRLISRIRHIHLKDIRKEKINELKAKNLSFLEGVKQGIFTVPGDGDIQNYPLFFELLAKNNYQGWLIVEAEQDPRKANPLEYAKKAMDYLRSLISW.

This sequence belongs to the IolE/MocC family. Requires glutathione as cofactor. Co(2+) is required as a cofactor. It depends on Mn(2+) as a cofactor.

It catalyses the reaction scyllo-inosose = 3D-3,5/4-trihydroxycyclohexane-1,2-dione + H2O. Functionally, catalyzes the dehydration of inosose (2-keto-myo-inositol, 2KMI or 2,4,6/3,5-pentahydroxycyclohexanone) to 3D-(3,5/4)-trihydroxycyclohexane-1,2-dione (D-2,3-diketo-4-deoxy-epi-inositol). This Mesomycoplasma hyopneumoniae (strain 232) (Mycoplasma hyopneumoniae) protein is Inosose dehydratase.